The chain runs to 458 residues: D-inositol 3-phosphate glycosyltransferase (458 aa).

Residues Met1 to Asp29 form a disordered region. 1D-myo-inositol 3-phosphate is bound at residue His47. UDP-N-acetyl-alpha-D-glucosamine is bound by residues Gln53 to Pro54 and Gly61. 1D-myo-inositol 3-phosphate contacts are provided by residues Asp58 to Asn63, Lys116, Tyr149, Thr173, and Arg193. Positions 267, 272, and 339 each coordinate UDP-N-acetyl-alpha-D-glucosamine. Ala351 contacts Mg(2+). Residues Glu361 and Glu369 each contribute to the UDP-N-acetyl-alpha-D-glucosamine site. Thr375 provides a ligand contact to Mg(2+).

This sequence belongs to the glycosyltransferase group 1 family. MshA subfamily. Homodimer.

The enzyme catalyses 1D-myo-inositol 3-phosphate + UDP-N-acetyl-alpha-D-glucosamine = 1D-myo-inositol 2-acetamido-2-deoxy-alpha-D-glucopyranoside 3-phosphate + UDP + H(+). Catalyzes the transfer of a N-acetyl-glucosamine moiety to 1D-myo-inositol 3-phosphate to produce 1D-myo-inositol 2-acetamido-2-deoxy-glucopyranoside 3-phosphate in the mycothiol biosynthesis pathway. This is D-inositol 3-phosphate glycosyltransferase from Nocardioides sp. (strain ATCC BAA-499 / JS614).